The sequence spans 157 residues: SUMO-conjugating enzyme UBC9-B (157 aa).

The 154-residue stretch at 4–157 (IALSRLAQER…VRAQAKKFSP (154 aa)) folds into the UBC core domain. An interaction with SUMO1 region spans residues 13 to 18 (RKAWRK). Cysteine 93 acts as the Glycyl thioester intermediate in catalysis.

Belongs to the ubiquitin-conjugating enzyme family. In terms of assembly, forms a tight complex with rangap1 and ranbp2. Interacts with vsx1.

It is found in the nucleus. The protein operates within protein modification; protein sumoylation. Its function is as follows. Accepts the ubiquitin-like proteins sumo1, sumo2 and sumo3 from the uble1a-uble1b E1 complex and catalyzes their covalent attachment to other proteins with the help of an E3 ligase such as ranbp2 or cbx4. Essential for nuclear architecture and chromosome segregation. Mediates nuclear localization of vsx1. Required for progression through mitosis during organogenesis. The protein is SUMO-conjugating enzyme UBC9-B (ube2ib) of Danio rerio (Zebrafish).